A 24-amino-acid polypeptide reads, in one-letter code: Calreticulin (24 aa).

It belongs to the calreticulin family. As to quaternary structure, monomer. Component of an EIF2 complex at least composed of CELF1/CUGBP1, CALR, CALR3, EIF2S1, EIF2S2, HSP90B1 and HSPA5. Interacts with PDIA3/ERp57 and SPACA9. Interacts with TRIM21. Interacts with NR3C1. Interacts with PPIB. Interacts (via P-domain) with PDIA5. Interacts with CLCC1. Pancreas.

Its subcellular location is the endoplasmic reticulum lumen. The protein resides in the cytoplasm. The protein localises to the cytosol. It localises to the cytolytic granule. It is found in the secreted. Its subcellular location is the extracellular space. The protein resides in the extracellular matrix. The protein localises to the cell surface. It localises to the sarcoplasmic reticulum lumen. It is found in the cytoplasmic vesicle. Its subcellular location is the secretory vesicle. The protein resides in the cortical granule. In terms of biological role, calcium-binding chaperone that promotes folding, oligomeric assembly and quality control in the endoplasmic reticulum (ER) via the calreticulin/calnexin cycle. This lectin interacts transiently with almost all of the monoglucosylated glycoproteins that are synthesized in the ER. Interacts with the DNA-binding domain of NR3C1 and mediates its nuclear export. Involved in maternal gene expression regulation. May participate in oocyte maturation via the regulation of calcium homeostasis. Present in the cortical granules of non-activated oocytes, is exocytosed during the cortical reaction in response to oocyte activation and might participate in the block to polyspermy. In Canis lupus familiaris (Dog), this protein is Calreticulin (CALR).